The sequence spans 350 residues: Phosphate acyltransferase (350 aa).

The protein belongs to the PlsX family. In terms of assembly, homodimer. Probably interacts with PlsY.

The protein localises to the cytoplasm. It catalyses the reaction a fatty acyl-[ACP] + phosphate = an acyl phosphate + holo-[ACP]. It participates in lipid metabolism; phospholipid metabolism. Catalyzes the reversible formation of acyl-phosphate (acyl-PO(4)) from acyl-[acyl-carrier-protein] (acyl-ACP). This enzyme utilizes acyl-ACP as fatty acyl donor, but not acyl-CoA. The sequence is that of Phosphate acyltransferase from Magnetococcus marinus (strain ATCC BAA-1437 / JCM 17883 / MC-1).